We begin with the raw amino-acid sequence, 220 residues long: UPF0758 protein APL_1970 (220 aa).

The MPN domain maps to 98–220; it reads NINEPYLAVM…YFSFEEEKFR (123 aa). Zn(2+) contacts are provided by H169, H171, and D182. Positions 169–182 match the JAMM motif motif; that stretch reads HNHPSGNCTPSESD.

The protein belongs to the UPF0758 family.

This chain is UPF0758 protein APL_1970, found in Actinobacillus pleuropneumoniae serotype 5b (strain L20).